We begin with the raw amino-acid sequence, 542 residues long: CTP synthase (542 aa).

Residues 1–265 form an amidoligase domain region; it reads MARYVFITGG…DDEVLAAFGI (265 aa). Ser13 lines the CTP pocket. Ser13 is a binding site for UTP. Residues 14 to 19 and Asp71 contribute to the ATP site; that span reads SLGKGI. The Mg(2+) site is built by Asp71 and Glu139. Residues 146–148, 186–191, and Lys222 contribute to the CTP site; these read DIE and KTKPTQ. Residues 186–191 and Lys222 each bind UTP; that span reads KTKPTQ. The Glutamine amidotransferase type-1 domain occupies 291–541; that stretch reads TIAIVGKYTG…IEAATEQSRL (251 aa). An L-glutamine-binding site is contributed by Gly353. Cys380 functions as the Nucleophile; for glutamine hydrolysis in the catalytic mechanism. L-glutamine contacts are provided by residues 381-384, Glu404, and Arg469; that span reads FGMQ. Residues His514 and Glu516 contribute to the active site.

It belongs to the CTP synthase family. Homotetramer.

It catalyses the reaction UTP + L-glutamine + ATP + H2O = CTP + L-glutamate + ADP + phosphate + 2 H(+). The enzyme catalyses L-glutamine + H2O = L-glutamate + NH4(+). The catalysed reaction is UTP + NH4(+) + ATP = CTP + ADP + phosphate + 2 H(+). It participates in pyrimidine metabolism; CTP biosynthesis via de novo pathway; CTP from UDP: step 2/2. Its activity is regulated as follows. Allosterically activated by GTP, when glutamine is the substrate; GTP has no effect on the reaction when ammonia is the substrate. The allosteric effector GTP functions by stabilizing the protein conformation that binds the tetrahedral intermediate(s) formed during glutamine hydrolysis. Inhibited by the product CTP, via allosteric rather than competitive inhibition. In terms of biological role, catalyzes the ATP-dependent amination of UTP to CTP with either L-glutamine or ammonia as the source of nitrogen. Regulates intracellular CTP levels through interactions with the four ribonucleotide triphosphates. The sequence is that of CTP synthase from Rhizobium johnstonii (strain DSM 114642 / LMG 32736 / 3841) (Rhizobium leguminosarum bv. viciae).